Reading from the N-terminus, the 157-residue chain is Vitamin K-dependent protein C (157 aa).

In terms of domain architecture, Peptidase S1 spans 1–157 (EKWELDLDIK…GCGRLHNYGV (157 aa)). An N-linked (GlcNAc...) asparagine glycan is attached at Asn-17. Asp-26 acts as the Charge relay system in catalysis. N-linked (GlcNAc...) asparagine glycosylation is present at Asn-78. Cystine bridges form between Cys-96–Cys-110 and Cys-121–Cys-149. Residue Ser-125 is the Charge relay system of the active site.

It belongs to the peptidase S1 family. Plasma; synthesized in the liver.

It is found in the secreted. Its subcellular location is the golgi apparatus. It localises to the endoplasmic reticulum. It carries out the reaction Degradation of blood coagulation factors Va and VIIIa.. Functionally, protein C is a vitamin K-dependent serine protease that regulates blood coagulation by inactivating factors Va and VIIIa in the presence of calcium ions and phospholipids. Exerts a protective effect on the endothelial cell barrier function. This Felis catus (Cat) protein is Vitamin K-dependent protein C (PROC).